Consider the following 439-residue polypeptide: Lipase 1 (439 aa).

A signal peptide spans 1 to 24; it reads MRCSLRMQLLLLLGLCVFISRIQG. The interval 28–60 is disordered; that stretch reads GGEEDEEDEEEEEEEEESVEDETPEDRLQRKNI. Positions 29–51 are enriched in acidic residues; it reads GEEDEEDEEEEEEEEESVEDETP. 2 N-linked (GlcNAc...) asparagine glycosylation sites follow: Asn124 and Asn151. Catalysis depends on Ser197, which acts as the Charge relay system. N-linked (GlcNAc...) asparagine glycosylation is found at Asn346 and Asn379. Residue His393 is the Charge relay system of the active site. N-linked (GlcNAc...) asparagine glycosylation occurs at Asn426.

It belongs to the AB hydrolase superfamily. Lipase family. In 14 hours embryos expression is seen in the foregut/midgut boundary.

It is found in the secreted. Its function is as follows. Could be a digestive enzyme. The chain is Lipase 1 (Lip1) from Drosophila melanogaster (Fruit fly).